The chain runs to 385 residues: UDP-N-acetylglucosamine--N-acetylmuramyl-(pentapeptide) pyrophosphoryl-undecaprenol N-acetylglucosamine transferase (385 aa).

UDP-N-acetyl-alpha-D-glucosamine-binding positions include 24-26 (TAG), Asn-143, Arg-180, Ser-214, and Gln-310.

This sequence belongs to the glycosyltransferase 28 family. MurG subfamily.

The protein localises to the cell membrane. The enzyme catalyses di-trans,octa-cis-undecaprenyl diphospho-N-acetyl-alpha-D-muramoyl-L-alanyl-D-glutamyl-meso-2,6-diaminopimeloyl-D-alanyl-D-alanine + UDP-N-acetyl-alpha-D-glucosamine = di-trans,octa-cis-undecaprenyl diphospho-[N-acetyl-alpha-D-glucosaminyl-(1-&gt;4)]-N-acetyl-alpha-D-muramoyl-L-alanyl-D-glutamyl-meso-2,6-diaminopimeloyl-D-alanyl-D-alanine + UDP + H(+). It participates in cell wall biogenesis; peptidoglycan biosynthesis. Its function is as follows. Cell wall formation. Catalyzes the transfer of a GlcNAc subunit on undecaprenyl-pyrophosphoryl-MurNAc-pentapeptide (lipid intermediate I) to form undecaprenyl-pyrophosphoryl-MurNAc-(pentapeptide)GlcNAc (lipid intermediate II). This Mycolicibacterium smegmatis (strain ATCC 700084 / mc(2)155) (Mycobacterium smegmatis) protein is UDP-N-acetylglucosamine--N-acetylmuramyl-(pentapeptide) pyrophosphoryl-undecaprenol N-acetylglucosamine transferase.